The following is a 745-amino-acid chain: MEKDVVSLEDALEHGLTKEEFQKIQEILGRIPNSTELGIFSAMWSEHCSYKNSILKLKTLPTTSDKLLAKAGEENAGAMDIGDGLAVVFKIESHNHPTAVEPYQGAATGVGGIMRDIFTMGARPIVSLNSLRFGNPDEPKNKYLLSRAVKGIGDYGNSLGIAVSGGELFIDECFSKNPLVNAMTVGIVRHDQMASATTGGQIGNSVYIVGATTGRDGIHGASFASKDLSKESESKRSAVQVGDPFMEKLLMEASLEAIQKGLLVGIQDMGAAGISCATSEMSAKGKTGMKIDLDLVPFRETGMNAYEAMLSESQERMLVVPKKGKESELVSIFEKWNLNAVKIGEVTADGMIEIYMGGKLKAKIPAESLVLGGGAPRYERETKRPSYLDAVKTWKPDEIPDVTKGANSKEILLKILSSWNVCSRKPITEQYDSEVGLVKLIGPGLDGGLSAIPGTNKALATATDCNSRYTYLDPYKGAEFAVCEAARNVYVTGATPYGVTNNLNFANPYIPENYYIFSECIRGMGDACRFLGLPVTGGNVSFYNESPEGPIFPTPTIGMVGILENKEKLIFNFPKEIGVELAVLGNFRPSLGGSEYLKKIHGQINGSIPELDIKEELELCKLILSLNESRILKSAKDLSLGGIAVALSKTVLFSGLGIESDLTSLRRNRLDLTLFGESSTAVLVGFDSLSKEDIRKQTEAYGLKFYPIGKTNSSGILEIKDAEIKISFQELSGPYEKGLEAVFAL.

The active site involves His-47. Residues Tyr-50 and Lys-90 each contribute to the ATP site. A Mg(2+)-binding site is contributed by Glu-92. Residues 93–96 (SHNH) and Arg-115 each bind substrate. His-94 functions as the Proton acceptor in the catalytic mechanism. Residue Asp-116 participates in Mg(2+) binding. Gln-240 contributes to the substrate binding site. Asp-268 is a binding site for Mg(2+). Residue 312–314 (ESQ) participates in substrate binding. 2 residues coordinate ATP: Asn-501 and Gly-538. Asn-539 serves as a coordination point for Mg(2+). Residue Ser-541 participates in substrate binding.

Belongs to the FGAMS family. In terms of assembly, monomer. Part of the FGAM synthase complex composed of 1 PurL, 1 PurQ and 2 PurS subunits.

Its subcellular location is the cytoplasm. The enzyme catalyses N(2)-formyl-N(1)-(5-phospho-beta-D-ribosyl)glycinamide + L-glutamine + ATP + H2O = 2-formamido-N(1)-(5-O-phospho-beta-D-ribosyl)acetamidine + L-glutamate + ADP + phosphate + H(+). It participates in purine metabolism; IMP biosynthesis via de novo pathway; 5-amino-1-(5-phospho-D-ribosyl)imidazole from N(2)-formyl-N(1)-(5-phospho-D-ribosyl)glycinamide: step 1/2. Functionally, part of the phosphoribosylformylglycinamidine synthase complex involved in the purines biosynthetic pathway. Catalyzes the ATP-dependent conversion of formylglycinamide ribonucleotide (FGAR) and glutamine to yield formylglycinamidine ribonucleotide (FGAM) and glutamate. The FGAM synthase complex is composed of three subunits. PurQ produces an ammonia molecule by converting glutamine to glutamate. PurL transfers the ammonia molecule to FGAR to form FGAM in an ATP-dependent manner. PurS interacts with PurQ and PurL and is thought to assist in the transfer of the ammonia molecule from PurQ to PurL. The polypeptide is Phosphoribosylformylglycinamidine synthase subunit PurL (Leptospira interrogans serogroup Icterohaemorrhagiae serovar Lai (strain 56601)).